Reading from the N-terminus, the 109-residue chain is Latartoxin-2a (109 aa).

An N-terminal signal peptide occupies residues methionine 1–serine 19. A propeptide spans lysine 20 to arginine 37 (removed in mature form). The short motif at serine 34–arginine 37 is the Processing quadruplet motif element. Cystine bridges form between cysteine 39-cysteine 56, cysteine 46-cysteine 67, cysteine 55-cysteine 81, cysteine 69-cysteine 79, and cysteine 72-cysteine 93. Residue valine 108 is modified to Valine amide.

The protein belongs to the neurotoxin 19 (CSTX) family. 11 (latartoxin) subfamily. Post-translationally, contains 5 disulfide bonds. In terms of processing, cleavage of the propeptide depends on the processing quadruplet motif (XXXR, with at least one of X being E). In terms of tissue distribution, expressed by the venom gland.

The protein localises to the secreted. Insect toxin. Causes paralysis in larvae of C.vicina by depolarizing membranes at the neuromuscular junction. This is Latartoxin-2a from Lachesana tarabaevi (Spider).